We begin with the raw amino-acid sequence, 404 residues long: Rhomboid-related protein 3 (404 aa).

EF-hand domains follow at residues 34-69 (APED…HSSK) and 70-105 (LDPH…KRSN). 7 consecutive transmembrane segments (helical) span residues 164 to 184 (WFMI…GVLL), 227 to 247 (LGLN…VHGA), 250 to 270 (IGLV…VADM), 274 to 294 (VVGS…NIVM), 305 to 324 (LLRM…RAVW), 338 to 358 (PSFV…VVVL), and 371 to 391 (WWIF…WNIF). The active-site Nucleophile is the Ser-278. His-343 is an active-site residue.

Belongs to the peptidase S54 family.

The protein localises to the membrane. It catalyses the reaction Cleaves type-1 transmembrane domains using a catalytic dyad composed of serine and histidine that are contributed by different transmembrane domains.. May be involved in regulated intramembrane proteolysis and the subsequent release of functional polypeptides from their membrane anchors. In Mus musculus (Mouse), this protein is Rhomboid-related protein 3 (Rhbdl3).